The primary structure comprises 169 residues: MTDSDHRLPDRPGEGDPGRGRRIGIDVGCVRVGVATSDPDGVLATPVETVRREKSSDRHVRRLAQLVTELEAVEVVVGLPRTLADRTGPAAHDAIDVAEALARRIAPVPVRMADERLTTVSAQRSLREAGVRAKGQRAMIDQVAAVGILQSWLDQRRAALAAPGEGGHG.

Residues 1-19 are compositionally biased toward basic and acidic residues; that stretch reads MTDSDHRLPDRPGEGDPGR. A disordered region spans residues 1–22; sequence MTDSDHRLPDRPGEGDPGRGRR.

Belongs to the YqgF nuclease family.

It localises to the cytoplasm. Could be a nuclease involved in processing of the 5'-end of pre-16S rRNA. The chain is Putative pre-16S rRNA nuclease from Mycobacterium sp. (strain JLS).